We begin with the raw amino-acid sequence, 89 residues long: Small ribosomal subunit protein uS15 (89 aa).

The protein belongs to the universal ribosomal protein uS15 family. Part of the 30S ribosomal subunit. Forms a bridge to the 50S subunit in the 70S ribosome, contacting the 23S rRNA.

Functionally, one of the primary rRNA binding proteins, it binds directly to 16S rRNA where it helps nucleate assembly of the platform of the 30S subunit by binding and bridging several RNA helices of the 16S rRNA. Its function is as follows. Forms an intersubunit bridge (bridge B4) with the 23S rRNA of the 50S subunit in the ribosome. The polypeptide is Small ribosomal subunit protein uS15 (Parvibaculum lavamentivorans (strain DS-1 / DSM 13023 / NCIMB 13966)).